A 127-amino-acid chain; its full sequence is Small ribosomal subunit protein uS13 (127 aa).

The segment at 90-127 (RRHRQGLPVRGQRTRTNARTRRGRRVTVAGKKKAPSKK) is disordered. Over residues 101–127 (QRTRTNARTRRGRRVTVAGKKKAPSKK) the composition is skewed to basic residues.

It belongs to the universal ribosomal protein uS13 family. Part of the 30S ribosomal subunit. Forms a loose heterodimer with protein S19. Forms two bridges to the 50S subunit in the 70S ribosome.

Located at the top of the head of the 30S subunit, it contacts several helices of the 16S rRNA. In the 70S ribosome it contacts the 23S rRNA (bridge B1a) and protein L5 of the 50S subunit (bridge B1b), connecting the 2 subunits; these bridges are implicated in subunit movement. Contacts the tRNAs in the A and P-sites. This chain is Small ribosomal subunit protein uS13, found in Rippkaea orientalis (strain PCC 8801 / RF-1) (Cyanothece sp. (strain PCC 8801)).